We begin with the raw amino-acid sequence, 1405 residues long: MKDLLKFLKQQSKTEEFNGIKIGLASPDLIRSWSFGEVKKPETINYRTFKPEREGLFCARIFGPVKDYECLCGKYKRLKHRGVICEKCGVEVTQTKVRRERMGHIELASPVAHIWFLKSLPSRIGLMLDMTLRDIERVLYFESFVVIEPGMTSLERGQMLTEETYLDALEEYGDEFEAKMGAEAVLELLRAIDLAKEIEQMREELPSINSETRRKKVTKRLKLMEAFFTSGNKPEWMILKVLPVLPPDLRPLVPLDGGRFATSDLNDLYRRVINRNNRLKRLLDLAAPDIIVRNEKRMLQESVDALLDNGRRGRAITGSNKRPLKSLADMIKGKQGRFRQNLLGKRVDYSGRSVITVGPTLRLHQCGLPKKMALELFKPFIYGKLEGRGLATTIKAAKKMVEREVAEVWDVLDEVIREHPVMLNRAPTLHRLGIQAFEPVLIEGKAIQLHPLVCAAYNADFDGDQMAVHVPLTLEAQLEARALMMSTNNILSPANGEPVITPSQDVVLGLYYTSRERINGRGEGMAFMSVAEVEKAYATGAAELHARVKVRITETIIGDDGERTEQRRIVDTTVGRALLSLILPAGLSFDLVNQNMGKKQISKLLNTCYRQLGLKDTVIFADQLMYTGFRFATISGASVGIDDMVIPDEKYTLVADAEAEVLEIQEQFQSGLVTAGERYNKVIDIWASANEKVSKAMMENLSTETVINRDGVEEKQASFNSIYMMADSGARGSAAQIRQLAGMRGLMAKPDGSIIETPITANFREGLNVLQYFISTHGARKGLADTALKTANSGYLTRRLVDVAQDLVVIEDDCGTHEGLTMKPLIEGGDVVEPLRERVLGRVVAVDVFYPGTEDVLAPRNTLLDEAWCDKLEEHSIDEVIVRSVITCDTDFGVCAACYGRDLARGHIINHGEAIGVVAAQSIGEPGTQLTMRTFHIGGAASRASAENNVQVKNSGSLKLHNAKHVTNSDGKLVIVSRSSELAIIDELGREKERYKVPYGTVLEKLEEAAVEAGDIIANWDPHTHPIISEVAGSIKFVDMIDGVTMTRQTDELTGLSSIVILDVGQRGTAGKEMRPMIRLLGANGSDLMIPGTEVPAQYFLPGSAIVNLDDNAQIAVGDALARIPQESSKTRDITGGLPRVADLFEARKPKEPAILAEISGTISFGKETKGKRRLVITPADGGDQYEEMIPKWRNLNVFEGEKVERGEVIADGPEAAHDILRLRGIHNVANYIVNEVQDVYRLQGVKINDKHIEVIIRQMLRKCLITSAGDTEFLEGEQVEVSRVKIANRELIAQGKVPATFERELLGITKASLATESFISAASFQETTRVLTEAAVGGKSDQLRGLKENVIVGRLIPAGTGYAYHKTRNDARAKKDEPVVVNKVTASEAEQNLADLLNMAGSQD.

Residues C70, C72, C85, and C88 each contribute to the Zn(2+) site. Residues D460, D462, and D464 each contribute to the Mg(2+) site. Zn(2+)-binding residues include C814, C888, C895, and C898.

Belongs to the RNA polymerase beta' chain family. As to quaternary structure, the RNAP catalytic core consists of 2 alpha, 1 beta, 1 beta' and 1 omega subunit. When a sigma factor is associated with the core the holoenzyme is formed, which can initiate transcription. It depends on Mg(2+) as a cofactor. Requires Zn(2+) as cofactor.

The enzyme catalyses RNA(n) + a ribonucleoside 5'-triphosphate = RNA(n+1) + diphosphate. Functionally, DNA-dependent RNA polymerase catalyzes the transcription of DNA into RNA using the four ribonucleoside triphosphates as substrates. This Shewanella putrefaciens (strain CN-32 / ATCC BAA-453) protein is DNA-directed RNA polymerase subunit beta'.